The chain runs to 283 residues: MLDSTGYAVRDDDDDDPELLLPGGEVVDTWREGYPYDERMHRADYEEQKRLLQIELLKLQKWSQAHGHRHVIVFEGRDAAGKGGTIKRFMEHLNPRGARVVALEKPTERERTQWYFQRYVEHLPAAGELVLFDRSWYNRAGVERVMGYCTPKQHAEFIRQAPLFEQMLVNDGISLTKLWFSVTRSEQLTRFTIRQVDPVRQWKLSPTDLASLDKWDDYTAAKEEMFAWTDTEIAPWTVVKSNDKKRARINAMRYVLGKFDYDNKDHEVVGQADPLIVGRALSD.

Belongs to the polyphosphate kinase 2 (PPK2) family. Class I subfamily.

It carries out the reaction [phosphate](n) + GTP = [phosphate](n+1) + GDP. In terms of biological role, uses inorganic polyphosphate (polyP) as a donor to convert GDP to GTP. This Mycolicibacterium smegmatis (strain ATCC 700084 / mc(2)155) (Mycobacterium smegmatis) protein is GDP-polyphosphate phosphotransferase.